A 171-amino-acid chain; its full sequence is MVKYSQEPGNPTKSAKAMGRDLRVHFKNTRETAFALRKLPLTKAKRYLEDVIAHKQAIPFRRYCGGVGRTAQAKSRHSNGQGRWPVKSARFILDLLKNAESNADVKGLDVDNLYVSHIQVNQAQKQRRRTYRAHGRINPYMSSPCHIELILSEKEEPVKKEADNIVAARKQ.

The protein belongs to the universal ribosomal protein uL22 family.

The chain is Large ribosomal subunit protein uL22 (RPL17) from Zea mays (Maize).